The chain runs to 196 residues: Recombination protein RecR (196 aa).

The segment at 55–70 (CELCGNLESESPCSIC) adopts a C4-type zinc-finger fold. Positions 78–173 (DIVCVVEEIT…KLSFLAHGIP (96 aa)) constitute a Toprim domain.

It belongs to the RecR family.

Its function is as follows. May play a role in DNA repair. It seems to be involved in an RecBC-independent recombinational process of DNA repair. It may act with RecF and RecO. The protein is Recombination protein RecR of Neorickettsia sennetsu (strain ATCC VR-367 / Miyayama) (Ehrlichia sennetsu).